The following is a 151-amino-acid chain: UPF0178 protein Ping_0754 (151 aa).

The protein belongs to the UPF0178 family.

This is UPF0178 protein Ping_0754 from Psychromonas ingrahamii (strain DSM 17664 / CCUG 51855 / 37).